The sequence spans 187 residues: Ribosome maturation factor RimP (187 aa).

The protein belongs to the RimP family.

Its subcellular location is the cytoplasm. Its function is as follows. Required for maturation of 30S ribosomal subunits. The polypeptide is Ribosome maturation factor RimP (Phenylobacterium zucineum (strain HLK1)).